A 494-amino-acid polypeptide reads, in one-letter code: Protein DETOXIFICATION 23 (494 aa).

The interval 1–25 (MARREGEVTETLLKKSTENRGEDRD) is disordered. The next 12 membrane-spanning stretches (helical) occupy residues 40-60 (LWVV…LSLI), 74-94 (AAYS…LLGM), 123-143 (IVLT…GPIL), 158-178 (IIAL…TCQM), 188-208 (IIAY…WLLV), 223-243 (LVAH…GGCT), 268-288 (GGMI…TGNL), 297-317 (ALAI…GFMA), 340-360 (MVVV…FLFL), 384-404 (LLAF…VAVG), 416-436 (LACY…VVGL), and 441-461 (VWLG…VMTM).

It belongs to the multi antimicrobial extrusion (MATE) (TC 2.A.66.1) family.

The protein localises to the membrane. In Arabidopsis thaliana (Mouse-ear cress), this protein is Protein DETOXIFICATION 23.